A 315-amino-acid polypeptide reads, in one-letter code: Small ribosomal subunit biogenesis GTPase RsgA (315 aa).

One can recognise a CP-type G domain in the interval leucine 79–phenylalanine 243. GTP is bound by residues asparagine 128–aspartate 131 and glycine 182–serine 190. Zn(2+) is bound by residues cysteine 267, cysteine 272, histidine 274, and cysteine 280.

The protein belongs to the TRAFAC class YlqF/YawG GTPase family. RsgA subfamily. In terms of assembly, monomer. Associates with 30S ribosomal subunit, binds 16S rRNA. Zn(2+) is required as a cofactor.

Its subcellular location is the cytoplasm. Its function is as follows. One of several proteins that assist in the late maturation steps of the functional core of the 30S ribosomal subunit. Helps release RbfA from mature subunits. May play a role in the assembly of ribosomal proteins into the subunit. Circularly permuted GTPase that catalyzes slow GTP hydrolysis, GTPase activity is stimulated by the 30S ribosomal subunit. The sequence is that of Small ribosomal subunit biogenesis GTPase RsgA from Porphyromonas gingivalis (strain ATCC BAA-308 / W83).